The following is a 502-amino-acid chain: Xylulose kinase (502 aa).

Residue 82 to 83 coordinates substrate; that stretch reads MH. Asp240 acts as the Proton acceptor in catalysis.

It belongs to the FGGY kinase family.

The catalysed reaction is D-xylulose + ATP = D-xylulose 5-phosphate + ADP + H(+). Catalyzes the phosphorylation of D-xylulose to D-xylulose 5-phosphate. The chain is Xylulose kinase from Levilactobacillus brevis (Lactobacillus brevis).